A 154-amino-acid polypeptide reads, in one-letter code: Iron sulfur cluster assembly protein 1, mitochondrial (154 aa).

Belongs to the NifU family. Component of the core Fe-S cluster (ISC) assembly machinery. It depends on [2Fe-2S] cluster as a cofactor.

Its subcellular location is the mitochondrion matrix. The protein operates within cofactor biosynthesis; iron-sulfur cluster biosynthesis. Scaffold protein for the de novo synthesis of iron-sulfur (Fe-S) clusters within mitochondria, which is required for maturation of both mitochondrial and cytoplasmic [2Fe-2S] and [4Fe-4S] proteins. First, a [2Fe-2S] cluster is transiently assembled on the scaffold protein ISU1. In a second step, the cluster is released from ISU1, transferred to a glutaredoxin, followed by the formation of mitochondrial [2Fe-2S] proteins, the synthesis of [4Fe-4S] clusters and their target-specific insertion into the recipient apoproteins. Cluster assembly on ISU1 depends on the function of the cysteine desulfurase complex NFS1-ISD11, which serves as the sulfur donor for cluster synthesis, the iron-binding protein frataxin as the putative iron donor, and the electron transfer chain comprised of ferredoxin reductase and ferredoxin, which receive their electrons from NADH. This is Iron sulfur cluster assembly protein 1, mitochondrial (ISU1) from Eremothecium gossypii (strain ATCC 10895 / CBS 109.51 / FGSC 9923 / NRRL Y-1056) (Yeast).